We begin with the raw amino-acid sequence, 562 residues long: Glutamate--tRNA ligase (562 aa).

The 'HIGH' region motif lies at 104–114 (PNPDFYMTLGN).

The protein belongs to the class-I aminoacyl-tRNA synthetase family. Glutamate--tRNA ligase type 2 subfamily.

The protein resides in the cytoplasm. It catalyses the reaction tRNA(Glu) + L-glutamate + ATP = L-glutamyl-tRNA(Glu) + AMP + diphosphate. Its function is as follows. Catalyzes the attachment of glutamate to tRNA(Glu) in a two-step reaction: glutamate is first activated by ATP to form Glu-AMP and then transferred to the acceptor end of tRNA(Glu). In Ignicoccus hospitalis (strain KIN4/I / DSM 18386 / JCM 14125), this protein is Glutamate--tRNA ligase.